We begin with the raw amino-acid sequence, 201 residues long: Recombination protein RecR (201 aa).

Residues 60–75 (CSCCGNVDTSDPCTIC) form a C4-type zinc finger. One can recognise a Toprim domain in the interval 83 to 178 (TTLIVVEDVS…RVTRLAHGVP (96 aa)).

It belongs to the RecR family.

In terms of biological role, may play a role in DNA repair. It seems to be involved in an RecBC-independent recombinational process of DNA repair. It may act with RecF and RecO. This chain is Recombination protein RecR, found in Brucella anthropi (strain ATCC 49188 / DSM 6882 / CCUG 24695 / JCM 21032 / LMG 3331 / NBRC 15819 / NCTC 12168 / Alc 37) (Ochrobactrum anthropi).